The primary structure comprises 172 residues: MSKKINGFEVLGEVAWLWASSPLHRKWPLSLLAINVLPAIESNQYVLLKRDGFPIAFCSWANLNLENEIKYLDDVASLVADDWTSGDRRWFIDWIAPFGDSAALYKHMRDNFPNELFRAIRVDPDSRVGKISEFHGGKIDKKLASKIFQQYHFELMSELKNKQNFKFSLVNS.

Catalysis depends on residues H24 and D93.

Belongs to the RTX toxin acyltransferase family. As to quaternary structure, homodimer.

The protein resides in the cytoplasm. It carries out the reaction a fatty acyl-[ACP] + L-lysyl-[protein] = N(6)-(fatty acyl)-L-lysyl-[protein] + holo-[ACP] + H(+). Its function is as follows. Protein-lysine acyltransferase that catalyzes fatty acylation of the protoxin, thereby converting it to the active toxin. The protein is RTX-I toxin-activating lysine-acyltransferase ApxIC of Actinobacillus pleuropneumoniae (Haemophilus pleuropneumoniae).